A 257-amino-acid chain; its full sequence is Snake venom serine protease KN8 (257 aa).

An N-terminal signal peptide occupies residues 1-18 (MVLIRVLANLLILQLSYA). Residues 19-24 (QKSSEL) constitute a propeptide that is removed on maturation. A Peptidase S1 domain is found at 25 to 248 (VVGGLPCNIN…HLDWIKSIIA (224 aa)). Disulfide bonds link Cys-31/Cys-162, Cys-49/Cys-65, Cys-141/Cys-209, Cys-173/Cys-188, and Cys-199/Cys-224. Catalysis depends on His-64, which acts as the Charge relay system. An N-linked (GlcNAc...) asparagine glycan is attached at Asn-102. Asp-109 acts as the Charge relay system in catalysis. N-linked (GlcNAc...) asparagine glycans are attached at residues Asn-120 and Asn-121. Ser-203 serves as the catalytic Charge relay system.

Belongs to the peptidase S1 family. Snake venom subfamily. In terms of assembly, monomer. In terms of tissue distribution, expressed by the venom gland.

The protein localises to the secreted. Its function is as follows. Snake venom serine protease that may act in the hemostasis system of the prey. This is Snake venom serine protease KN8 from Trimeresurus stejnegeri (Chinese green tree viper).